The sequence spans 397 residues: Acetate kinase (397 aa).

Position 8 (N8) interacts with Mg(2+). K15 contributes to the ATP binding site. R89 serves as a coordination point for substrate. The active-site Proton donor/acceptor is the D146. Residues 206 to 210 (HVGNG), 283 to 285 (DMR), and 331 to 335 (GIGEN) each bind ATP. E383 is a Mg(2+) binding site.

It belongs to the acetokinase family. In terms of assembly, homodimer. Requires Mg(2+) as cofactor. Mn(2+) serves as cofactor.

It is found in the cytoplasm. It carries out the reaction acetate + ATP = acetyl phosphate + ADP. The protein operates within metabolic intermediate biosynthesis; acetyl-CoA biosynthesis; acetyl-CoA from acetate: step 1/2. Its function is as follows. Catalyzes the formation of acetyl phosphate from acetate and ATP. Can also catalyze the reverse reaction. The sequence is that of Acetate kinase from Streptococcus thermophilus (strain ATCC BAA-491 / LMD-9).